A 260-amino-acid polypeptide reads, in one-letter code: Ribosomal RNA small subunit methyltransferase G (260 aa).

S-adenosyl-L-methionine is bound by residues G94, F99, 117 to 119 (DSS), 145 to 146 (AE), and R164.

This sequence belongs to the methyltransferase superfamily. RNA methyltransferase RsmG family.

The protein resides in the cytoplasm. Specifically methylates the N7 position of a guanine in 16S rRNA. This Synechococcus sp. (strain JA-3-3Ab) (Cyanobacteria bacterium Yellowstone A-Prime) protein is Ribosomal RNA small subunit methyltransferase G.